A 346-amino-acid chain; its full sequence is DNA-directed RNA polymerase subunit alpha (346 aa).

Residues 1 to 242 (MLIQDGDKLI…DQLSVFINFD (242 aa)) form an alpha N-terminal domain (alpha-NTD) region. Residues 258–346 (LNPNLFKSID…WLKRKEKNEA (89 aa)) are alpha C-terminal domain (alpha-CTD).

Belongs to the RNA polymerase alpha chain family. As to quaternary structure, homodimer. The RNAP catalytic core consists of 2 alpha, 1 beta, 1 beta' and 1 omega subunit. When a sigma factor is associated with the core the holoenzyme is formed, which can initiate transcription.

It carries out the reaction RNA(n) + a ribonucleoside 5'-triphosphate = RNA(n+1) + diphosphate. Functionally, DNA-dependent RNA polymerase catalyzes the transcription of DNA into RNA using the four ribonucleoside triphosphates as substrates. This chain is DNA-directed RNA polymerase subunit alpha, found in Maridesulfovibrio salexigens (strain ATCC 14822 / DSM 2638 / NCIMB 8403 / VKM B-1763) (Desulfovibrio salexigens).